The chain runs to 218 residues: Thiopurine S-methyltransferase (218 aa).

Tryptophan 10, leucine 45, glutamate 66, and arginine 123 together coordinate S-adenosyl-L-methionine.

It belongs to the class I-like SAM-binding methyltransferase superfamily. TPMT family.

It localises to the cytoplasm. It carries out the reaction S-adenosyl-L-methionine + a thiopurine = S-adenosyl-L-homocysteine + a thiopurine S-methylether.. The protein is Thiopurine S-methyltransferase of Pseudomonas aeruginosa (strain ATCC 15692 / DSM 22644 / CIP 104116 / JCM 14847 / LMG 12228 / 1C / PRS 101 / PAO1).